The primary structure comprises 303 residues: Methionine import ATP-binding protein MetN (303 aa).

The ABC transporter domain occupies 1–222 (MLDQISLEIP…PDPKMRHFLG (222 aa)). 19–26 (GHSGAGKS) lines the ATP pocket.

This sequence belongs to the ABC transporter superfamily. Methionine importer (TC 3.A.1.24) family. As to quaternary structure, the complex is composed of two ATP-binding proteins (MetN), two transmembrane proteins (MetI) and a solute-binding protein (MetQ).

Its subcellular location is the cell inner membrane. It catalyses the reaction L-methionine(out) + ATP + H2O = L-methionine(in) + ADP + phosphate + H(+). The catalysed reaction is D-methionine(out) + ATP + H2O = D-methionine(in) + ADP + phosphate + H(+). Part of the ABC transporter complex MetNIQ involved in methionine import. Responsible for energy coupling to the transport system. This Wolinella succinogenes (strain ATCC 29543 / DSM 1740 / CCUG 13145 / JCM 31913 / LMG 7466 / NCTC 11488 / FDC 602W) (Vibrio succinogenes) protein is Methionine import ATP-binding protein MetN.